The following is a 185-amino-acid chain: MRCPFCGGPDTQVKDSRPSEDSSAIRRRRVCPDCGGRFTTFERVQLRELVVLKRSGKRVPFDRDKLQRSIDVALRKRTVDPERVERLVSGITRRLESGGEGEVTSEAIGEAVMEGLKGLDDVAYVRFASVYKNFREAQDFQDLLGTLGERLDGEGDLPEQGDAVPAPPDEAVAAPRRGRPARKRA.

Positions 1–24 (MRCPFCGGPDTQVKDSRPSEDSSA) are disordered. Residues 3 to 34 (CPFCGGPDTQVKDSRPSEDSSAIRRRRVCPDC) fold into a zinc finger. Residues 12–24 (QVKDSRPSEDSSA) are compositionally biased toward basic and acidic residues. The 91-residue stretch at 49 to 139 (LVVLKRSGKR…VYKNFREAQD (91 aa)) folds into the ATP-cone domain. Positions 148 to 185 (GERLDGEGDLPEQGDAVPAPPDEAVAAPRRGRPARKRA) are disordered. The segment covering 176–185 (RRGRPARKRA) has biased composition (basic residues).

This sequence belongs to the NrdR family. Requires Zn(2+) as cofactor.

Its function is as follows. Negatively regulates transcription of bacterial ribonucleotide reductase nrd genes and operons by binding to NrdR-boxes. This chain is Transcriptional repressor NrdR, found in Methylorubrum extorquens (strain CM4 / NCIMB 13688) (Methylobacterium extorquens).